A 284-amino-acid chain; its full sequence is Expansin-A17 (284 aa).

Residues Met-1–Ala-21 form the signal peptide. Residues Gly-71 to Gly-185 enclose the Expansin-like EG45 domain. The Expansin-like CBD domain maps to Tyr-195–Gly-279.

Belongs to the expansin family. Expansin A subfamily. In terms of tissue distribution, expressed in roots.

It localises to the secreted. It is found in the cell wall. The protein localises to the membrane. May cause loosening and extension of plant cell walls by disrupting non-covalent bonding between cellulose microfibrils and matrix glucans. No enzymatic activity has been found. May be required for rapid internodal elongation in deepwater rice during submergence. This is Expansin-A17 (EXPA17) from Oryza sativa subsp. japonica (Rice).